Reading from the N-terminus, the 630-residue chain is Altered inheritance of mitochondria protein 9, mitochondrial (630 aa).

The transit peptide at 1-40 (MLKLTSRVGPKRLSSGLKSSSFKVNATIISKKFQSSLNSK) directs the protein to the mitochondrion.

It belongs to the AIM9 family.

The protein resides in the mitochondrion. In Debaryomyces hansenii (strain ATCC 36239 / CBS 767 / BCRC 21394 / JCM 1990 / NBRC 0083 / IGC 2968) (Yeast), this protein is Altered inheritance of mitochondria protein 9, mitochondrial (AIM9).